The sequence spans 261 residues: Undecaprenyl-diphosphatase 2 (261 aa).

Transmembrane regions (helical) follow at residues 1 to 21 (MLEALLLGVVEGLTEFLPISS), 38 to 58 (PGKTYEIVVQLGAILAVCVVF), 75 to 95 (FAFARNVMVAFLPAAVIGATL), 103 to 123 (LESPLVAAIALVVGGVAILVI), 138 to 158 (MSPALALGVGFCQVLAMVPGV), 178 to 198 (AAEFSFFLAIPTMCGASAYSL), 212 to 232 (LIALGFVAAFLSALVVVKGFI), and 240 to 260 (FAPFAWYRIAFGSLMAVLILM).

This sequence belongs to the UppP family.

Its subcellular location is the cell inner membrane. It catalyses the reaction di-trans,octa-cis-undecaprenyl diphosphate + H2O = di-trans,octa-cis-undecaprenyl phosphate + phosphate + H(+). Its function is as follows. Catalyzes the dephosphorylation of undecaprenyl diphosphate (UPP). Confers resistance to bacitracin. This chain is Undecaprenyl-diphosphatase 2, found in Paramagnetospirillum magneticum (strain ATCC 700264 / AMB-1) (Magnetospirillum magneticum).